Consider the following 221-residue polypeptide: Mediator of RNA polymerase II transcription subunit 19a (221 aa).

The tract at residues 101–221 (PVELPPAEKG…DEVGAIRVAG (121 aa)) is disordered. Residues 142–152 (EHKKHKHKHKD) are compositionally biased toward basic residues. Residues 153-178 (RSKDKDKDKDRDRKKDKNGHHDSGDH) are compositionally biased toward basic and acidic residues. The segment covering 179-188 (SKKHHDKKRK) has biased composition (basic residues).

The protein belongs to the plant Mediator complex subunit 19 family. In terms of assembly, component of the Mediator complex. Interacts with FIB2.

It localises to the nucleus. Functionally, component of the Mediator complex, a coactivator involved in the regulated transcription of nearly all RNA polymerase II-dependent genes. Mediator functions as a bridge to convey information from gene-specific regulatory proteins to the basal RNA polymerase II transcription machinery. The Mediator complex, having a compact conformation in its free form, is recruited to promoters by direct interactions with regulatory proteins and serves for the assembly of a functional preinitiation complex with RNA polymerase II and the general transcription factors. The polypeptide is Mediator of RNA polymerase II transcription subunit 19a (MED19A) (Arabidopsis thaliana (Mouse-ear cress)).